We begin with the raw amino-acid sequence, 243 residues long: Thiamin pyrophosphokinase 1 (243 aa).

It belongs to the thiamine pyrophosphokinase family.

It catalyses the reaction thiamine + ATP = thiamine diphosphate + AMP + H(+). It functions in the pathway cofactor biosynthesis; thiamine diphosphate biosynthesis; thiamine diphosphate from thiamine: step 1/1. Its function is as follows. Catalyzes the phosphorylation of thiamine to thiamine pyrophosphate. Functions cell non-autonomously. In Caenorhabditis elegans, this protein is Thiamin pyrophosphokinase 1.